The sequence spans 138 residues: Large ribosomal subunit protein uL16 (138 aa).

Positions 1–13 (MLQPARRKYRKEQ) are enriched in basic residues. Residues 1 to 20 (MLQPARRKYRKEQKGRNTGV) are disordered.

Belongs to the universal ribosomal protein uL16 family. Part of the 50S ribosomal subunit.

Its function is as follows. Binds 23S rRNA and is also seen to make contacts with the A and possibly P site tRNAs. The protein is Large ribosomal subunit protein uL16 of Verminephrobacter eiseniae (strain EF01-2).